The following is a 326-amino-acid chain: Protein LEG1 homolog (326 aa).

The first 22 residues, 1-22 (MKSNKTIFLILLFLINFNSIYS), serve as a signal peptide directing secretion. Residues N58, N85, N165, N226, and N245 are each glycosylated (N-linked (GlcNAc...) asparagine).

Belongs to the LEG1 family.

It localises to the secreted. In Dictyostelium discoideum (Social amoeba), this protein is Protein LEG1 homolog.